A 122-amino-acid polypeptide reads, in one-letter code: Large ribosomal subunit protein uL14c (122 aa).

Belongs to the universal ribosomal protein uL14 family. Part of the 50S ribosomal subunit.

The protein localises to the plastid. The protein resides in the chloroplast. Its function is as follows. Binds to 23S rRNA. This chain is Large ribosomal subunit protein uL14c, found in Mesostigma viride (Green alga).